Consider the following 429-residue polypeptide: UPF0597 protein GSU1527 (429 aa).

It belongs to the UPF0597 family.

This Geobacter sulfurreducens (strain ATCC 51573 / DSM 12127 / PCA) protein is UPF0597 protein GSU1527.